Reading from the N-terminus, the 1203-residue chain is MTKCRRRRLHLSNIYAFKGRKSNFQEDHSHIGGPGFSRVVYCNEPNSPAAERRNYVGNYVRSTKYTLASFIPKSLFEQFRRVANFYFLVTGVLSLTALSPYSPISALLPLTFVIAASMVKEAIEDWGRKKQDIEMNNRKVKVHDGNGIFRREGWRDLKVGNIVRVEKDEFFPADLLLLSSSYEDSICYVETMNLDGETNLKVKQGLEATSSALHEDSDFKELKAVVKCEDPNADLYTFVGTLHFEEQRLPLSITQLLLRDSKLRNTEYIYGVVVFTGHDTKVIQNSTDPPSKRSRIERKMDKIIYLMFGVVFLMSFIGSIVFGIETREDRVRNGGRTERWYLRPDNADIFFDPDRAPMAAVYHFFTAVMLYSYFIPISLYVSIEIVKVLQSLFINNDILMYYEENDKPAHARTSNLNEELGMVDTILSDKTGTLTCNSMEFIKCSIAGTAYGRGITEVERSMAMRSNGSSLVGDDLDVVVDQSGPKIKGFNFLDERVMKGNWVKQRDAAVLQKFFRLLAVCHTAIPETDEATGSVSYEAESPDEAAFVVAAREFGFEFFSRTQNGISFRELDLASGKTVERVYRLLNVLEFNSARKRMSVIVRDEDGRLLLLSKGADNVMFERLAKNGRKFEEKTREHVNEYADAGLRTLILAYREVDENEYIEFSKNFNEAKNSVTADRESLIDEITEQMERDLILLGATAVEDKLQNGVPDCIDKLAQAGIKIWVLTGDKMETAINIGFACSLLRQEMKQIIINLETPHIKALEKAGEKDAIEHASRESVVNQMEEGKALLTASSSASSHEAFALIIDGKSLTYALEDDFKKKFLDLATGCASVICCRSSPKQKALVTRLVKSGTGKTTLAIGDGANDVGMLQEADIGVGISGVEGMQAVMSSDIAIAQFRYLERLLLVHGHWCYSRISSMICYFFYKNITFGVTVFLYEAYTSFSAQPAYNDWFLSLFNVFFSSLPVIALGVFDQDVSARYCYKFPLLYQEGVQNLLFSWKRIIGWMFNGVFTALAIFFLCKESLKHQLYNPNGKTAGREILGGTMYTCVVWVVNLQMALAISYFTWLQHIVIWGSVAFWYIFLMIYGAITPSFSTDAYKVFIEALAPAPSYWLTTLFVMFFALIPFFVFKSVQMRFFPGYHQMIQWIRYEGHSNDPEFVEMVRQRSIRPTTVGFTARRAASVRRSGRFHDQLNKNFIAF.

Residues 1–71 lie on the Cytoplasmic side of the membrane; it reads MTKCRRRRLH…STKYTLASFI (71 aa). Residues 72 to 93 traverse the membrane as a helical segment; it reads PKSLFEQFRRVANFYFLVTGVL. At 94 to 97 the chain is on the extracellular side; sequence SLTA. Residues 98–120 form a helical membrane-spanning segment; sequence LSPYSPISALLPLTFVIAASMVK. Over 121–303 the chain is Cytoplasmic; sequence EAIEDWGRKK…SRIERKMDKI (183 aa). The helical transmembrane segment at 304–325 threads the bilayer; that stretch reads IYLMFGVVFLMSFIGSIVFGIE. Over 326–363 the chain is Extracellular; sequence TREDRVRNGGRTERWYLRPDNADIFFDPDRAPMAAVYH. Residues 364-381 form a helical membrane-spanning segment; sequence FFTAVMLYSYFIPISLYV. Over 382-921 the chain is Cytoplasmic; the sequence is SIEIVKVLQS…HGHWCYSRIS (540 aa). D429 (4-aspartylphosphate intermediate) is an active-site residue. Mg(2+)-binding residues include D866 and D870. Residues 922–941 form a helical membrane-spanning segment; the sequence is SMICYFFYKNITFGVTVFLY. At 942–955 the chain is on the extracellular side; it reads EAYTSFSAQPAYND. A helical membrane pass occupies residues 956–975; that stretch reads WFLSLFNVFFSSLPVIALGV. The Cytoplasmic portion of the chain corresponds to 976–1005; that stretch reads FDQDVSARYCYKFPLLYQEGVQNLLFSWKR. Residues 1006-1028 form a helical membrane-spanning segment; it reads IIGWMFNGVFTALAIFFLCKESL. The Extracellular segment spans residues 1029–1041; sequence KHQLYNPNGKTAG. Residues 1042 to 1064 traverse the membrane as a helical segment; the sequence is REILGGTMYTCVVWVVNLQMALA. The Cytoplasmic portion of the chain corresponds to 1065–1070; that stretch reads ISYFTW. A helical membrane pass occupies residues 1071-1091; it reads LQHIVIWGSVAFWYIFLMIYG. The Extracellular portion of the chain corresponds to 1092 to 1108; sequence AITPSFSTDAYKVFIEA. The chain crosses the membrane as a helical span at residues 1109–1133; that stretch reads LAPAPSYWLTTLFVMFFALIPFFVF. The Cytoplasmic segment spans residues 1134 to 1203; it reads KSVQMRFFPG…DQLNKNFIAF (70 aa).

Belongs to the cation transport ATPase (P-type) (TC 3.A.3) family. Type IV subfamily.

The protein resides in the membrane. The enzyme catalyses ATP + H2O + phospholipidSide 1 = ADP + phosphate + phospholipidSide 2.. Functionally, involved in transport of phospholipids. The chain is Probable phospholipid-transporting ATPase 11 from Arabidopsis thaliana (Mouse-ear cress).